Reading from the N-terminus, the 166-residue chain is Phospholipase A2 inhibitor clone 11 (166 aa).

The N-terminal stretch at 1-19 is a signal peptide; sequence MRLILLSGLLLLGIFLANG. The C-type lectin domain occupies 46–161; sequence LKGSFLIVHK…CDDNLLVVCE (116 aa). 2 disulfides stabilise this stretch: C83–C160 and C138–C152. N122 carries an N-linked (GlcNAc...) asparagine glycan.

Belongs to the alpha-type phospholipase A2 inhibitor family. Homotrimer; non-covalently linked. As to expression, expressed by the liver.

The protein localises to the secreted. Functionally, this phospholipase A2 inhibitor binds directly phospholipase A2 in the presence or absence of calcium. The protein is Phospholipase A2 inhibitor clone 11 of Bothrops neuwiedi (Neuwied's lancehead).